The chain runs to 100 residues: UPF0213 protein YhbQ (100 aa).

The region spanning T2–R77 is the GIY-YIG domain.

It belongs to the UPF0213 family.

In Escherichia coli O139:H28 (strain E24377A / ETEC), this protein is UPF0213 protein YhbQ.